The sequence spans 63 residues: Large ribosomal subunit protein bL28 (63 aa).

Belongs to the bacterial ribosomal protein bL28 family.

This is Large ribosomal subunit protein bL28 from Pelobacter propionicus (strain DSM 2379 / NBRC 103807 / OttBd1).